A 592-amino-acid polypeptide reads, in one-letter code: Bifunctional purine biosynthesis protein ATIC (592 aa).

Methionine 1 is subject to N-acetylmethionine. The region spanning methionine 1–cysteine 146 is the MGS-like domain. The segment at methionine 1–serine 198 is IMP cyclohydrolase. Residues serine 12–lysine 14, serine 34–threonine 37, arginine 64–threonine 67, cysteine 101–asparagine 102, and aspartate 125–isoleucine 126 contribute to the IMP site. Residue lysine 137 is the Proton donor/acceptor; for FAICAR cyclization activity of the active site. Lysine 199 bears the N6-acetyllysine mark. Residues lysine 199–histidine 592 are AICAR formyltransferase. 5-amino-1-(5-phospho-beta-D-ribosyl)imidazole-4-carboxamide-binding positions include arginine 207–tyrosine 208, histidine 267, glycine 316, aspartate 339, asparagine 431, and arginine 451. Histidine 267 serves as the catalytic Proton acceptor; for AICAR formyltransferase activity. Isoleucine 452 is a binding site for (6R)-10-formyltetrahydrofolate. Phenylalanine 541 contributes to the 5-amino-1-(5-phospho-beta-D-ribosyl)imidazole-4-carboxamide binding site. Residues aspartate 546 and serine 565–threonine 566 each bind (6R)-10-formyltetrahydrofolate. Arginine 588 serves as a coordination point for 5-amino-1-(5-phospho-beta-D-ribosyl)imidazole-4-carboxamide.

Belongs to the PurH family. Homodimer. Associates with internalized INSR complexes on Golgi/endosomal membranes. Interacts with INSR; ATIC together with PRKAA2/AMPK2 and HACD3/PTPLAD1 is proposed to be part of a signaling network regulating INSR autophosphorylation and endocytosis. In terms of tissue distribution, expressed in liver.

Its subcellular location is the cytoplasm. The protein resides in the cytosol. It catalyses the reaction (6R)-10-formyltetrahydrofolate + 5-amino-1-(5-phospho-beta-D-ribosyl)imidazole-4-carboxamide = 5-formamido-1-(5-phospho-D-ribosyl)imidazole-4-carboxamide + (6S)-5,6,7,8-tetrahydrofolate. The catalysed reaction is 10-formyldihydrofolate + 5-amino-1-(5-phospho-beta-D-ribosyl)imidazole-4-carboxamide = 5-formamido-1-(5-phospho-D-ribosyl)imidazole-4-carboxamide + 7,8-dihydrofolate. The enzyme catalyses IMP + H2O = 5-formamido-1-(5-phospho-D-ribosyl)imidazole-4-carboxamide. It functions in the pathway purine metabolism; IMP biosynthesis via de novo pathway; 5-formamido-1-(5-phospho-D-ribosyl)imidazole-4-carboxamide from 5-amino-1-(5-phospho-D-ribosyl)imidazole-4-carboxamide (10-formyl THF route): step 1/1. The protein operates within purine metabolism; IMP biosynthesis via de novo pathway; IMP from 5-formamido-1-(5-phospho-D-ribosyl)imidazole-4-carboxamide: step 1/1. AMP and XMP inhibit AICAR formyltransferase activity. In terms of biological role, bifunctional enzyme that catalyzes the last two steps of purine biosynthesis. Acts as a transformylase that incorporates a formyl group to the AMP analog AICAR (5-amino-1-(5-phospho-beta-D-ribosyl)imidazole-4-carboxamide) to produce the intermediate formyl-AICAR (FAICAR). Can use both 10-formyldihydrofolate and 10-formyltetrahydrofolate as the formyl donor in this reaction. Also catalyzes the cyclization of FAICAR to inosine monophosphate (IMP). Promotes insulin receptor/INSR autophosphorylation and is involved in INSR internalization. This chain is Bifunctional purine biosynthesis protein ATIC (Atic), found in Rattus norvegicus (Rat).